The primary structure comprises 249 residues: Cyclin-dependent kinase inhibitor 2 (249 aa).

Residues 118–180 (KVCTQAGEDH…MCRRSSTTSA (63 aa)) form a disordered region. The segment covering 161 to 180 (AESNQEAKQQMCRRSSTTSA) has biased composition (polar residues).

This sequence belongs to the CDI family. ICK/KRP subfamily.

The sequence is that of Cyclin-dependent kinase inhibitor 2 (KRP2) from Oryza sativa subsp. japonica (Rice).